Here is a 344-residue protein sequence, read N- to C-terminus: Nuclear distribution protein nudE-like 1-A (344 aa).

Residues 26-187 are a coiled coil; it reads YKKSYKEAQE…RQELAVRDTR (162 aa). The span at 181–190 shows a compositional bias: basic and acidic residues; it reads LAVRDTRSEV. Disordered stretches follow at residues 181–209 and 322–344; these read LAVR…TDSA and PGDG…VLSV.

This sequence belongs to the nudE family. Phosphorylated in mitosis.

It is found in the cytoplasm. Its subcellular location is the cytoskeleton. The protein localises to the microtubule organizing center. The protein resides in the centrosome. It localises to the spindle. Functionally, required for organization of the cellular microtubule array and microtubule anchoring at the centrosome. Positively regulates the activity of the minus-end directed microtubule motor protein dynein. May enhance dynein-mediated microtubule sliding by targeting dynein to the microtubule plus end. This is Nuclear distribution protein nudE-like 1-A (ndel1a) from Danio rerio (Zebrafish).